A 423-amino-acid chain; its full sequence is MLNPDVKTIVDAVEGSQDLFRHSLPMIASENVTSPMVRKVLSSDLGHRYAEGQVGHRFYQGCGFVDVIEGKAIELAKEIFRAPHVNVQPVSGVNCNIAAFFALADPGDKLMALAVPSGGHISHAKFSAAGIRGLKIYTHPYDNQIMNIDVDRMIKQIREIRPRVVMFGASLFLFPHPVKEAREVCDEVGASIVYDGAHVLGLIAGGQFQDPLREGADVVTGSTHKTFPGPQGGIILCKEKFAKDIDEAVFPGTVSNAHLHHKAGLAITLAEMKAFGKQYAAQIVKNSQALGAAMDDLGFNVLCKDLGYTKSHQIAVDVSKIGGGSVLASKLERANIITNKNLFPWDDVNTTDNPSGLRLGTQELTRLGMNEPEMKEVAKFIKRVAIDKEEPEKVKKDVVHFKSQYQAVKYCFDGDGAYEFSLR.

119–121 (GHI) serves as a coordination point for (6S)-5,6,7,8-tetrahydrofolate. Lys-225 carries the post-translational modification N6-(pyridoxal phosphate)lysine.

It belongs to the SHMT family. In terms of assembly, homodimer. Requires pyridoxal 5'-phosphate as cofactor.

The protein resides in the cytoplasm. It catalyses the reaction (6R)-5,10-methylene-5,6,7,8-tetrahydrofolate + glycine + H2O = (6S)-5,6,7,8-tetrahydrofolate + L-serine. Its pathway is one-carbon metabolism; tetrahydrofolate interconversion. It functions in the pathway amino-acid biosynthesis; glycine biosynthesis; glycine from L-serine: step 1/1. Its function is as follows. Catalyzes the reversible interconversion of serine and glycine with tetrahydrofolate (THF) serving as the one-carbon carrier. Also exhibits THF-independent aldolase activity toward beta-hydroxyamino acids, producing glycine and aldehydes, via a retro-aldol mechanism. This Methanocella arvoryzae (strain DSM 22066 / NBRC 105507 / MRE50) protein is Serine hydroxymethyltransferase.